Here is a 110-residue protein sequence, read N- to C-terminus: Eukaryotic translation initiation factor eIF1 (110 aa).

Residue Thr40 is modified to Phosphothreonine.

The protein belongs to the SUI1 family.

In terms of biological role, probably involved in translation. In Drosophila melanogaster (Fruit fly), this protein is Eukaryotic translation initiation factor eIF1.